The following is a 369-amino-acid chain: Glycolate oxidase 5 (369 aa).

One can recognise an FMN hydroxy acid dehydrogenase domain in the interval 1–360 (MGEITNVTEY…TRNHVITEAD (360 aa)). Tyrosine 25 is a binding site for glyoxylate. FMN-binding positions include 78 to 80 (PSA), serine 107, 128 to 130 (QLY), and threonine 156. Glyoxylate is bound at residue tyrosine 130. Arginine 165 serves as a coordination point for glyoxylate. Residues lysine 231 and serine 253 each coordinate FMN. Residues histidine 255 and arginine 258 each contribute to the glyoxylate site. Histidine 255 functions as the Proton acceptor in the catalytic mechanism. Residues 286 to 290 (DGGVR) and 309 to 310 (GR) each bind FMN. A Microbody targeting signal motif is present at residues 367–369 (SRL).

The protein belongs to the FMN-dependent alpha-hydroxy acid dehydrogenase family. Homotetramer. It depends on FMN as a cofactor.

It localises to the peroxisome. The catalysed reaction is glycolate + O2 = glyoxylate + H2O2. The protein operates within photosynthesis; photorespiration; glycine from 2-phosphoglycolate: step 2/3. Its function is as follows. Catalyzes the oxidation of glycolate to glyoxylate, with a reduction of O2 to H2O2. Is a key enzyme in photorespiration in green plants. The chain is Glycolate oxidase 5 (GLO5) from Oryza sativa subsp. japonica (Rice).